A 415-amino-acid chain; its full sequence is G patch domain-containing protein 4 (415 aa).

Position 1 is an N-acetylmethionine (M1). T4 carries the post-translational modification Phosphothreonine. The G-patch domain maps to G11–A57. K46 is covalently cross-linked (Glycyl lysine isopeptide (Lys-Gly) (interchain with G-Cter in SUMO2)). T116 bears the Phosphothreonine mark. Disordered regions lie at residues T116–K141 and L191–S415. Residues G118–K141 are compositionally biased toward basic and acidic residues. S130 carries the phosphoserine modification. Positions L191–E201 are enriched in polar residues. Positions S224 to D239 are enriched in basic and acidic residues. Residue S258 is modified to Phosphoserine. A compositionally biased stretch (acidic residues) spans E335–K345. Basic residues predominate over residues R353 to Q364. Residues A387–E397 show a composition bias toward basic and acidic residues. Residues R398 to D407 are compositionally biased toward basic residues.

The chain is G patch domain-containing protein 4 (Gpatch4) from Mus musculus (Mouse).